Reading from the N-terminus, the 160-residue chain is MTKKKVKPGSNTIALNKRARHDYFIEEELEAGLSLQGWEVKSMRAGKANISDSYIIFRDGEAYLFGATIQPLTVASTHVVCDPTRTRKLLLNQRELASLFGKANRDGYTIVALSLYWKNAWAKIKIGLAKGKQQHDKRNDIKDREWKMQKERIMKNANRG.

Belongs to the SmpB family.

The protein resides in the cytoplasm. Its function is as follows. Required for rescue of stalled ribosomes mediated by trans-translation. Binds to transfer-messenger RNA (tmRNA), required for stable association of tmRNA with ribosomes. tmRNA and SmpB together mimic tRNA shape, replacing the anticodon stem-loop with SmpB. tmRNA is encoded by the ssrA gene; the 2 termini fold to resemble tRNA(Ala) and it encodes a 'tag peptide', a short internal open reading frame. During trans-translation Ala-aminoacylated tmRNA acts like a tRNA, entering the A-site of stalled ribosomes, displacing the stalled mRNA. The ribosome then switches to translate the ORF on the tmRNA; the nascent peptide is terminated with the 'tag peptide' encoded by the tmRNA and targeted for degradation. The ribosome is freed to recommence translation, which seems to be the essential function of trans-translation. This is SsrA-binding protein from Mannheimia succiniciproducens (strain KCTC 0769BP / MBEL55E).